The following is a 702-amino-acid chain: Phosphoglycerol transferase I (702 aa).

3 helical membrane passes run 2-22, 71-91, and 103-123; these read HWILALSLLLLLWLLVASPRL, FSGYIAVFIGMVLLSLSPLML, and GGAVFGAFVVMLLVSMAVSPV.

Belongs to the OpgB family.

Its subcellular location is the cell inner membrane. It catalyses the reaction a phosphatidylglycerol + a membrane-derived-oligosaccharide D-glucose = a 1,2-diacyl-sn-glycerol + a membrane-derived-oligosaccharide 6-(glycerophospho)-D-glucose.. Its pathway is glycan metabolism; osmoregulated periplasmic glucan (OPG) biosynthesis. Transfers a phosphoglycerol residue from phosphatidylglycerol to the membrane-bound nascent glucan backbones. This chain is Phosphoglycerol transferase I, found in Xanthomonas campestris pv. campestris (strain B100).